A 590-amino-acid chain; its full sequence is UvrABC system protein C (590 aa).

Residues 15–92 enclose the GIY-YIG domain; the sequence is DLPGCYMMKD…IQKHKPYYNI (78 aa). One can recognise a UVR domain in the interval 197–232; that stretch reads SKIKKELEQKMETASENLEFERAAEIRDQIHYVEMT.

This sequence belongs to the UvrC family. In terms of assembly, interacts with UvrB in an incision complex.

The protein localises to the cytoplasm. The UvrABC repair system catalyzes the recognition and processing of DNA lesions. UvrC both incises the 5' and 3' sides of the lesion. The N-terminal half is responsible for the 3' incision and the C-terminal half is responsible for the 5' incision. The protein is UvrABC system protein C of Ligilactobacillus salivarius (strain UCC118) (Lactobacillus salivarius).